The primary structure comprises 394 residues: NAD(P)H-quinone oxidoreductase subunit H (394 aa).

Belongs to the complex I 49 kDa subunit family. In terms of assembly, NDH-1 can be composed of about 15 different subunits; different subcomplexes with different compositions have been identified which probably have different functions.

It is found in the cellular thylakoid membrane. The enzyme catalyses a plastoquinone + NADH + (n+1) H(+)(in) = a plastoquinol + NAD(+) + n H(+)(out). It carries out the reaction a plastoquinone + NADPH + (n+1) H(+)(in) = a plastoquinol + NADP(+) + n H(+)(out). In terms of biological role, NDH-1 shuttles electrons from an unknown electron donor, via FMN and iron-sulfur (Fe-S) centers, to quinones in the respiratory and/or the photosynthetic chain. The immediate electron acceptor for the enzyme in this species is believed to be plastoquinone. Couples the redox reaction to proton translocation, and thus conserves the redox energy in a proton gradient. Cyanobacterial NDH-1 also plays a role in inorganic carbon-concentration. The sequence is that of NAD(P)H-quinone oxidoreductase subunit H from Prochlorococcus marinus (strain NATL2A).